A 357-amino-acid chain; its full sequence is Geranylgeranyl pyrophosphate synthase 11, chloroplastic (357 aa).

The N-terminal 37 residues, 1-37 (MATTLSSSSLFIQFRGRRYNSLSSFNNLQKRTVLSLS), are a transit peptide targeting the chloroplast. Residues Lys-103, Arg-106, and His-135 each coordinate isopentenyl diphosphate. Residues Asp-142 and Asp-148 each coordinate Mg(2+). Arg-153 contacts dimethylallyl diphosphate. An isopentenyl diphosphate-binding site is contributed by Arg-154. Positions 242, 243, 280, 297, and 307 each coordinate dimethylallyl diphosphate.

Belongs to the FPP/GGPP synthase family. As to quaternary structure, monomer. Mg(2+) serves as cofactor.

It localises to the plastid. The protein resides in the chloroplast. The catalysed reaction is isopentenyl diphosphate + dimethylallyl diphosphate = (2E)-geranyl diphosphate + diphosphate. It catalyses the reaction isopentenyl diphosphate + (2E)-geranyl diphosphate = (2E,6E)-farnesyl diphosphate + diphosphate. It carries out the reaction isopentenyl diphosphate + (2E,6E)-farnesyl diphosphate = (2E,6E,10E)-geranylgeranyl diphosphate + diphosphate. It participates in isoprenoid biosynthesis; farnesyl diphosphate biosynthesis; farnesyl diphosphate from geranyl diphosphate and isopentenyl diphosphate: step 1/1. The protein operates within isoprenoid biosynthesis; geranyl diphosphate biosynthesis; geranyl diphosphate from dimethylallyl diphosphate and isopentenyl diphosphate: step 1/1. Its pathway is isoprenoid biosynthesis; geranylgeranyl diphosphate biosynthesis; geranylgeranyl diphosphate from farnesyl diphosphate and isopentenyl diphosphate: step 1/1. In terms of biological role, catalyzes the trans-addition of the three molecules of IPP onto DMAPP to form geranylgeranyl pyrophosphate. The polypeptide is Geranylgeranyl pyrophosphate synthase 11, chloroplastic (Arabidopsis thaliana (Mouse-ear cress)).